The sequence spans 500 residues: Chromosomal replication initiator protein DnaA (500 aa).

The segment at 1 to 81 (MVNASGDPVI…LQALRTVTGE (81 aa)) is domain I, interacts with DnaA modulators. The interval 81–155 (ENMFPAFKVV…QQKMNRDPET (75 aa)) is domain II. Residues 156–377 (HLNKNFTFDS…GALTRVTAVA (222 aa)) form a domain III, AAA+ region region. ATP contacts are provided by G200, G202, K203, and T204. Residues 378–500 (SLSNQPVTRA…TVRLKQSNTN (123 aa)) form a domain IV, binds dsDNA region.

This sequence belongs to the DnaA family. Oligomerizes as a right-handed, spiral filament on DNA at oriC.

It localises to the cytoplasm. Plays an essential role in the initiation and regulation of chromosomal replication. ATP-DnaA binds to the origin of replication (oriC) to initiate formation of the DNA replication initiation complex once per cell cycle. Binds the DnaA box (a 9 base pair repeat at the origin) and separates the double-stranded (ds)DNA. Forms a right-handed helical filament on oriC DNA; dsDNA binds to the exterior of the filament while single-stranded (ss)DNA is stabiized in the filament's interior. The ATP-DnaA-oriC complex binds and stabilizes one strand of the AT-rich DNA unwinding element (DUE), permitting loading of DNA polymerase. After initiation quickly degrades to an ADP-DnaA complex that is not apt for DNA replication. Binds acidic phospholipids. The polypeptide is Chromosomal replication initiator protein DnaA (Bifidobacterium longum subsp. infantis (strain ATCC 15697 / DSM 20088 / JCM 1222 / NCTC 11817 / S12)).